The primary structure comprises 1711 residues: Nuclear pore complex protein Nup214 (1711 aa).

Repeat copies occupy residues 472–473, 486–487, 497–498, 511–512, 514–515, 535–536, 588–589, and 598–599. Positions 472-1703 are 45 X 2 AA repeats of F-G; it reads FGAAAAKAPA…NSNAQKPAFG (1232 aa). 2 leucine-zipper regions span residues 650-672 and 767-788; these read LDDL…VQGL and LTRL…KSKL. The interval 886 to 905 is disordered; that stretch reads KPATANKYTQAAVAPPSPPD. The stretch at 1009–1010 is repeat 9; it reads FG. The tract at residues 1012-1081 is disordered; the sequence is GSPAVAAPTP…NKSFGFGGFT (70 aa). Basic and acidic residues-rich tracts occupy residues 1037 to 1051 and 1058 to 1072; these read TKPK…KEFK and EESK…ETEN. The interval 1044–1711 is interaction with emb; that stretch reads AAESKEFKAV…FGGSSFMNYR (668 aa). Tandem repeats lie at residues 1075–1076, 1077–1078, 1097–1098, 1106–1107, 1135–1136, 1218–1219, 1229–1230, and 1240–1241. Polar residues predominate over residues 1251–1261; that stretch reads TSVTEANNKTD. The disordered stretch occupies residues 1251 to 1270; it reads TSVTEANNKTDPISTTPSAI. Tandem repeats lie at residues 1356-1357, 1388-1389, 1399-1400, 1434-1435, 1449-1450, 1458-1459, 1472-1473, 1481-1482, 1487-1488, 1507-1508, 1512-1513, 1539-1540, 1547-1548, 1562-1563, 1571-1572, 1584-1585, 1588-1589, 1601-1602, 1617-1618, 1623-1624, 1629-1630, 1635-1636, 1641-1642, 1647-1648, 1650-1651, 1662-1663, and 1686-1687. Disordered regions lie at residues 1533–1552 and 1557–1614; these read SPQA…SPAT and SGGS…TTTP. 2 stretches are compositionally biased toward gly residues: residues 1560–1572 and 1582–1595; these read SIFG…GGFG and GGFG…GGGS. Positions 1596–1614 are enriched in low complexity; the sequence is VAQTGFGSPQAPQQQTTTP. Residues 1688–1698 are compositionally biased toward polar residues; it reads NLAQTGNSNAQ. The interval 1688–1711 is disordered; that stretch reads NLAQTGNSNAQKPAFGGSSFMNYR. Copy 45 of the repeat occupies 1702–1703; the sequence is FG.

In terms of assembly, component of the nuclear pore complex. Interacts with mbo/Nup88 and (via C-terminus) with emb to attenuate emb-mediated protein export.

It is found in the nucleus. The protein resides in the nuclear pore complex. The protein localises to the nucleus membrane. In terms of biological role, part of the nuclear pore complex. Serves as a docking site in the receptor-mediated import of substrates across the nuclear pore complex including emb, RanGAP and phosphorylated Mad. Protects mbo/Nup88 from proteasomal degradation at the nuclear pore. Together with mbo/Nup88, sequesters emb in the cytoplasm and thereby attenuates nuclear export signal (NES)-mediated nuclear export. Together with mbo/Nup88, required for the nuclear import of the Rel family transcription factors dorsal (dl) and Dorsal-related immunity factor (Dif) and the activation of an immune response. This is Nuclear pore complex protein Nup214 from Drosophila melanogaster (Fruit fly).